Reading from the N-terminus, the 406-residue chain is LIM/homeobox protein Lhx1 (406 aa).

LIM zinc-binding domains lie at 4–54 and 63–117; these read CAGC…CKND and CAGC…CKED. Disordered stretches follow at residues 128 to 187 and 293 to 374; these read NSLH…RTTI and YDFF…EVFG. A compositionally biased stretch (low complexity) spans 137–148; that stretch reads SDPSLSPDSQDP. Basic and acidic residues predominate over residues 151 to 167; that stretch reads DDAKDSESANVSDKEAG. Residue Ser162 is modified to Phosphoserine. The homeobox DNA-binding region spans 180 to 239; sequence RRGPRTTIKAKQLETLKAAFAATPKPTRHIREQLAQETGLNMRVIQVWFQNRRSKERRMK. Low complexity predominate over residues 315–327; sequence PSSGPSGTPLGGL. Residues 352–362 are compositionally biased toward pro residues; the sequence is GDSPSPEPSLP.

As to quaternary structure, interacts with LDB1 via the tandem LIM domains. Expressed in the brain, thymus, and tonsils. Expressed in samples from patients with chronic myeloid leukemia (CML) and in 58% of acute myeloid leukemia (AML) cell lines.

The protein localises to the nucleus. Functionally, potential transcription factor. May play a role in early mesoderm formation and later in lateral mesoderm differentiation and neurogenesis. The polypeptide is LIM/homeobox protein Lhx1 (LHX1) (Homo sapiens (Human)).